Reading from the N-terminus, the 138-residue chain is Outer membrane protein assembly factor BamE (138 aa).

The first 42 residues, 1 to 42 (MSHLTMIKTLNLRPFHSASALRKIVITSILGVAVTMSGCSLL), serve as a signal peptide directing secretion.

It belongs to the BamE family. Part of the Bam complex.

The protein resides in the cell outer membrane. Functionally, part of the outer membrane protein assembly complex, which is involved in assembly and insertion of beta-barrel proteins into the outer membrane. This Psychrobacter arcticus (strain DSM 17307 / VKM B-2377 / 273-4) protein is Outer membrane protein assembly factor BamE.